The chain runs to 236 residues: Purine nucleoside phosphorylase DeoD-type (236 aa).

A purine D-ribonucleoside is bound at residue His5. Phosphate contacts are provided by residues Gly21, Arg25, Arg44, and 88–91 (RVGT). A purine D-ribonucleoside-binding positions include 180–182 (EME) and 204–205 (SD). The Proton donor role is filled by Asp205.

This sequence belongs to the PNP/UDP phosphorylase family. As to quaternary structure, homohexamer; trimer of homodimers.

The catalysed reaction is a purine D-ribonucleoside + phosphate = a purine nucleobase + alpha-D-ribose 1-phosphate. It catalyses the reaction a purine 2'-deoxy-D-ribonucleoside + phosphate = a purine nucleobase + 2-deoxy-alpha-D-ribose 1-phosphate. Functionally, catalyzes the reversible phosphorolytic breakdown of the N-glycosidic bond in the beta-(deoxy)ribonucleoside molecules, with the formation of the corresponding free purine bases and pentose-1-phosphate. This is Purine nucleoside phosphorylase DeoD-type from Shewanella denitrificans (strain OS217 / ATCC BAA-1090 / DSM 15013).